The chain runs to 505 residues: DNA primase large subunit (505 aa).

Residues 253-270 (LSHSYTGQDYSTQKNTGK) form an interdomain linker region. The interval 266–503 (KNTGKISLDQ…LEMDLEGLEE (238 aa)) is interacts with PRIM1. Positions 287, 367, 384, and 424 each coordinate [4Fe-4S] cluster. The segment at 300–442 (HLRHGGRMQY…NVDDCGFSLN (143 aa)) is RNA:DNA duplex binding. A disordered region spans residues 463-486 (KEISQPETPQHKPSTQKTRDAASA). Polar residues predominate over residues 467-478 (QPETPQHKPSTQ). A Phosphothreonine modification is found at Thr470.

The protein belongs to the eukaryotic-type primase large subunit family. Heterodimer of a catalytic subunit PRIM1 and a regulatory subunit PRIM2, also known as the DNA primase complex. Interacts via (C-terminus) with PRIM1. Component of the alpha DNA polymerase complex (also known as the alpha DNA polymerase-primase complex) consisting of four subunits: the catalytic subunit POLA1, the regulatory subunit POLA2, and the primase complex subunits PRIM1 and PRIM2 respectively. Within the complex, POLA1 directly interacts with PRIM2. It depends on [4Fe-4S] cluster as a cofactor.

In terms of biological role, regulatory subunit of the DNA primase complex and component of the DNA polymerase alpha complex (also known as the alpha DNA polymerase-primase complex) which play an essential role in the initiation of DNA synthesis. During the S phase of the cell cycle, the DNA polymerase alpha complex (composed of a catalytic subunit POLA1, an accessory subunit POLA2 and two primase subunits, the catalytic subunit PRIM1 and the regulatory subunit PRIM2) is recruited to DNA at the replicative forks via direct interactions with MCM10 and WDHD1. The primase subunit of the polymerase alpha complex initiates DNA synthesis by oligomerising short RNA primers on both leading and lagging strands. These primers are initially extended by the polymerase alpha catalytic subunit and subsequently transferred to polymerase delta and polymerase epsilon for processive synthesis on the lagging and leading strand, respectively. In the primase complex, both subunits are necessary for the initial di-nucleotide formation, but the extension of the primer depends only on the catalytic subunit. Binds RNA:DNA duplex and coordinates the catalytic activities of PRIM1 and POLA2 during primase-to-polymerase switch. In Mus musculus (Mouse), this protein is DNA primase large subunit (Prim2).